The chain runs to 370 residues: Developmentally-regulated GTP-binding protein 1 homolog (370 aa).

Positions 65 to 292 constitute an OBG-type G domain; the sequence is ARVGLIGFPS…LLDKIWEYLK (228 aa). Residues 71–78, 117–121, and 250–253 each bind GTP; these read GFPSVGKS, DLPGI, and NKID. Residues 292-369 enclose the TGS domain; it reads KLIRVYTKPK…ADEDIVQIVK (78 aa).

This sequence belongs to the TRAFAC class OBG-HflX-like GTPase superfamily. OBG GTPase family.

This chain is Developmentally-regulated GTP-binding protein 1 homolog (drg1), found in Dictyostelium discoideum (Social amoeba).